The primary structure comprises 274 residues: uncharacterized protein (274 aa).

Belongs to the class IV-like SAM-binding methyltransferase superfamily. RNA methyltransferase TrmH family.

This is an uncharacterized protein from Synechocystis sp. (strain ATCC 27184 / PCC 6803 / Kazusa).